The following is a 270-amino-acid chain: Mediator of RNA polymerase II transcription subunit 4 (270 aa).

The tract at residues 1-22 (MAASSSGEKEKERMGGVSGMTG) is disordered. At Ala-2 the chain carries N-acetylalanine. The stretch at 26 to 131 (TRERLLSALE…ATAVYQAKEK (106 aa)) forms a coiled coil. A Phosphoserine modification is found at Ser-32. The tract at residues 227 to 270 (MSVNMLPPNHSTDFLLEPPGHNKENEDDVEVMSTDSSSSSSDSD) is disordered. Positions 259 to 270 (STDSSSSSSDSD) are enriched in low complexity.

This sequence belongs to the Mediator complex subunit 4 family. Component of the Mediator complex, which is composed of MED1, MED4, MED6, MED7, MED8, MED9, MED10, MED11, MED12, MED13, MED13L, MED14, MED15, MED16, MED17, MED18, MED19, MED20, MED21, MED22, MED23, MED24, MED25, MED26, MED27, MED29, MED30, MED31, CCNC, CDK8 and CDC2L6/CDK11. The MED12, MED13, CCNC and CDK8 subunits form a distinct module termed the CDK8 module. Mediator containing the CDK8 module is less active than Mediator lacking this module in supporting transcriptional activation. Individual preparations of the Mediator complex lacking one or more distinct subunits have been variously termed ARC, CRSP, DRIP, PC2, SMCC and TRAP.

The protein resides in the nucleus. Component of the Mediator complex, a coactivator involved in the regulated transcription of nearly all RNA polymerase II-dependent genes. Mediator functions as a bridge to convey information from gene-specific regulatory proteins to the basal RNA polymerase II transcription machinery. Mediator is recruited to promoters by direct interactions with regulatory proteins and serves as a scaffold for the assembly of a functional preinitiation complex with RNA polymerase II and the general transcription factors. The polypeptide is Mediator of RNA polymerase II transcription subunit 4 (Med4) (Rattus norvegicus (Rat)).